The sequence spans 365 residues: Putative agmatine deiminase (365 aa).

The agmatine site is built by Glu-214 and Asp-220. The active-site Amidino-cysteine intermediate is the Cys-357.

The protein belongs to the agmatine deiminase family. Tetramer of two homodimers.

It carries out the reaction agmatine + H2O = N-carbamoylputrescine + NH4(+). The sequence is that of Putative agmatine deiminase from Enterococcus faecalis (strain ATCC 700802 / V583).